The sequence spans 172 residues: R-phycocyanin beta subunit (172 aa).

N72 carries the N4-methylasparagine modification. C82 lines the (2R,3E)-phycocyanobilin pocket. A (2R,3E)-phycoerythrobilin-binding site is contributed by C153.

This sequence belongs to the phycobiliprotein family. As to quaternary structure, heterodimer of an alpha and a beta subunit, which further assembles into trimers and the trimers into hexamers. Post-translationally, contains two covalently linked bilin chromophores.

Its subcellular location is the cellular thylakoid membrane. In terms of biological role, light-harvesting photosynthetic bile pigment-protein from the phycobiliprotein complex (phycobilisome, PBS). Phycocyanin is the major phycobiliprotein in the PBS rod. This Synechococcus sp. (strain WH7803) protein is R-phycocyanin beta subunit (rpcB).